The following is a 655-amino-acid chain: Fructose-1,6-bisphosphatase class 3 (655 aa).

This sequence belongs to the FBPase class 3 family. Requires Mn(2+) as cofactor.

The catalysed reaction is beta-D-fructose 1,6-bisphosphate + H2O = beta-D-fructose 6-phosphate + phosphate. Its pathway is carbohydrate biosynthesis; gluconeogenesis. This Porphyromonas gingivalis (strain ATCC 33277 / DSM 20709 / CIP 103683 / JCM 12257 / NCTC 11834 / 2561) protein is Fructose-1,6-bisphosphatase class 3.